The sequence spans 495 residues: Probable cytosol aminopeptidase (495 aa).

Mn(2+)-binding residues include K264 and D269. Residue K276 is part of the active site. Mn(2+) is bound by residues D287, D346, and E348. The active site involves R350.

Belongs to the peptidase M17 family. Requires Mn(2+) as cofactor.

Its subcellular location is the cytoplasm. The enzyme catalyses Release of an N-terminal amino acid, Xaa-|-Yaa-, in which Xaa is preferably Leu, but may be other amino acids including Pro although not Arg or Lys, and Yaa may be Pro. Amino acid amides and methyl esters are also readily hydrolyzed, but rates on arylamides are exceedingly low.. It catalyses the reaction Release of an N-terminal amino acid, preferentially leucine, but not glutamic or aspartic acids.. Presumably involved in the processing and regular turnover of intracellular proteins. Catalyzes the removal of unsubstituted N-terminal amino acids from various peptides. The chain is Probable cytosol aminopeptidase from Geotalea uraniireducens (strain Rf4) (Geobacter uraniireducens).